Consider the following 378-residue polypeptide: Ribosomal RNA large subunit methyltransferase G (378 aa).

This sequence belongs to the methyltransferase superfamily. RlmG family.

Its subcellular location is the cytoplasm. The enzyme catalyses guanosine(1835) in 23S rRNA + S-adenosyl-L-methionine = N(2)-methylguanosine(1835) in 23S rRNA + S-adenosyl-L-homocysteine + H(+). Specifically methylates the guanine in position 1835 (m2G1835) of 23S rRNA. The polypeptide is Ribosomal RNA large subunit methyltransferase G (Salmonella gallinarum (strain 287/91 / NCTC 13346)).